A 145-amino-acid polypeptide reads, in one-letter code: D-aminoacyl-tRNA deacylase (145 aa).

The Gly-cisPro motif, important for rejection of L-amino acids signature appears at 137–138; that stretch reads GP.

This sequence belongs to the DTD family. Homodimer.

It localises to the cytoplasm. The enzyme catalyses glycyl-tRNA(Ala) + H2O = tRNA(Ala) + glycine + H(+). It catalyses the reaction a D-aminoacyl-tRNA + H2O = a tRNA + a D-alpha-amino acid + H(+). An aminoacyl-tRNA editing enzyme that deacylates mischarged D-aminoacyl-tRNAs. Also deacylates mischarged glycyl-tRNA(Ala), protecting cells against glycine mischarging by AlaRS. Acts via tRNA-based rather than protein-based catalysis; rejects L-amino acids rather than detecting D-amino acids in the active site. By recycling D-aminoacyl-tRNA to D-amino acids and free tRNA molecules, this enzyme counteracts the toxicity associated with the formation of D-aminoacyl-tRNA entities in vivo and helps enforce protein L-homochirality. The sequence is that of D-aminoacyl-tRNA deacylase from Brevibacillus brevis (strain 47 / JCM 6285 / NBRC 100599).